Reading from the N-terminus, the 414-residue chain is Tryptophan synthase beta chain (414 aa).

The residue at position 105 (Lys-105) is an N6-(pyridoxal phosphate)lysine.

Belongs to the TrpB family. In terms of assembly, tetramer of two alpha and two beta chains. The cofactor is pyridoxal 5'-phosphate.

It catalyses the reaction (1S,2R)-1-C-(indol-3-yl)glycerol 3-phosphate + L-serine = D-glyceraldehyde 3-phosphate + L-tryptophan + H2O. It functions in the pathway amino-acid biosynthesis; L-tryptophan biosynthesis; L-tryptophan from chorismate: step 5/5. The beta subunit is responsible for the synthesis of L-tryptophan from indole and L-serine. In Gloeobacter violaceus (strain ATCC 29082 / PCC 7421), this protein is Tryptophan synthase beta chain.